We begin with the raw amino-acid sequence, 92 residues long: Small ribosomal subunit protein bS20 (92 aa).

The tract at residues Met1–Ser23 is disordered.

Belongs to the bacterial ribosomal protein bS20 family.

Its function is as follows. Binds directly to 16S ribosomal RNA. In Stutzerimonas stutzeri (strain A1501) (Pseudomonas stutzeri), this protein is Small ribosomal subunit protein bS20.